Consider the following 151-residue polypeptide: GAVYLYNIGNLQCPNAVLQHMSIPQFLGEGTPVVFVRKSESDYGDVVRVMTVVYIKFFVKTTKLCVDQTVWKVNDEQLVVTGGKVGNENDIFKIMKTDLVTPGGSKYVYKLLHCPSHLGCKNIAGNFKNGYPRLVTVDDDKDFIPFVFIKA.

2 cysteine pairs are disulfide-bonded: C13–C65 and C114–C120.

It belongs to the protease inhibitor I3 (leguminous Kunitz-type inhibitor) family.

It is found in the vacuole. Its function is as follows. Inhibitor of cysteine proteases. May protect the plant by inhibiting proteases of invading organisms. The protein is Cysteine protease inhibitor 5 of Solanum tuberosum (Potato).